Reading from the N-terminus, the 480-residue chain is UDP-N-acetylmuramoylalanine--D-glutamate ligase (480 aa).

120–126 (GTNGKTT) contributes to the ATP binding site.

The protein belongs to the MurCDEF family.

The protein resides in the cytoplasm. It catalyses the reaction UDP-N-acetyl-alpha-D-muramoyl-L-alanine + D-glutamate + ATP = UDP-N-acetyl-alpha-D-muramoyl-L-alanyl-D-glutamate + ADP + phosphate + H(+). It participates in cell wall biogenesis; peptidoglycan biosynthesis. In terms of biological role, cell wall formation. Catalyzes the addition of glutamate to the nucleotide precursor UDP-N-acetylmuramoyl-L-alanine (UMA). This chain is UDP-N-acetylmuramoylalanine--D-glutamate ligase, found in Nocardia farcinica (strain IFM 10152).